Reading from the N-terminus, the 127-residue chain is MRHYEIILMINPEKNKKIFIIIEEYNKLIHMYKGIIHRFEDWGKRSLSYTIKNLKKAHYFLMNIEVSSECIKELENSFKFNINIIRYFILTRTKAHKKISPILKNKEENKKELNSSVIKINKNIKKK.

It belongs to the bacterial ribosomal protein bS6 family.

In terms of biological role, binds together with bS18 to 16S ribosomal RNA. This chain is Small ribosomal subunit protein bS6, found in Buchnera aphidicola subsp. Cinara cedri (strain Cc).